The following is a 353-amino-acid chain: Protein CYTOKININ-RESPONSIVE GATA TRANSCRIPTION FACTOR 1 (353 aa).

A Nuclear localization signal 1 motif is present at residues 137–144 (IRKGAATD). The tract at residues 142–166 (ATDPEGGAVRKPRRRAQAHQDESQQ) is disordered. The GATA-type zinc finger occupies 178–203 (CSDCNTTKTPLWRSGPCGPKSLCNAC). The short motif at 244–251 (EKRAADVD) is the Nuclear localization signal 2 element.

The protein belongs to the type IV zinc-finger family. Class B subfamily. In terms of tissue distribution, mostly expressed in leaves and stems, and, at low levels, in roots.

Its subcellular location is the nucleus. In terms of biological role, transcriptional regulator that specifically binds 5'-GATA-3' or 5'-GAT-3' motifs within gene promoters. Influences the expression of nuclear encoded chloroplast-targeted genes. Regulates chloroplast development and promotes chlorophyll accumulation. Modulates plant architecture (e.g. height, length and width of leaf blades, and flowering tillers production) and represses tillering, probably by modulating number of cells. Promotes senescence. Involved in grain filling, panicle development and starch production. The chain is Protein CYTOKININ-RESPONSIVE GATA TRANSCRIPTION FACTOR 1 from Oryza sativa subsp. japonica (Rice).